The following is a 280-amino-acid chain: Diaminopimelate epimerase (280 aa).

Substrate-binding residues include Asn-11 and Asn-64. Cys-73 functions as the Proton donor in the catalytic mechanism. Substrate-binding positions include 74–75 (GN), Asn-162, Asn-195, and 213–214 (ER). The active-site Proton acceptor is the Cys-222. 223 to 224 (GT) contributes to the substrate binding site.

It belongs to the diaminopimelate epimerase family. Homodimer.

The protein localises to the cytoplasm. It carries out the reaction (2S,6S)-2,6-diaminopimelate = meso-2,6-diaminopimelate. Its pathway is amino-acid biosynthesis; L-lysine biosynthesis via DAP pathway; DL-2,6-diaminopimelate from LL-2,6-diaminopimelate: step 1/1. In terms of biological role, catalyzes the stereoinversion of LL-2,6-diaminopimelate (L,L-DAP) to meso-diaminopimelate (meso-DAP), a precursor of L-lysine and an essential component of the bacterial peptidoglycan. In Pelotomaculum thermopropionicum (strain DSM 13744 / JCM 10971 / SI), this protein is Diaminopimelate epimerase.